We begin with the raw amino-acid sequence, 688 residues long: Envelope glycoprotein gp70 (688 aa).

Positions 1–98 (MPNHQSGSPT…SVLGPPPVSG (98 aa)) are cleaved as a signal peptide. Residues 99–624 (ESYWAYLPKP…ALNPLDWTQY (526 aa)) lie on the Extracellular side of the membrane. 2 N-linked (GlcNAc...) asparagine; by host glycosylation sites follow: Asn-127 and Asn-143. A coiled-coil region spans residues 426-474 (LLPVDIGDEPWFDDSAIQTFRYATDLIRAKRFVAAIILGISALIAIITS). A propeptide spanning residues 455–456 (KR) is cleaved from the precursor. Residues 457–477 (FVAAIILGISALIAIITSFAV) are fusion peptide. The interval 463 to 481 (LGISALIAIITSFAVATTA) is immunosuppression. N-linked (GlcNAc...) asparagine; by host glycosylation occurs at Asn-498. Residues 511–541 (LKLEARLNALEEVVLDLGQDVANLKTRMSTR) are a coiled coil. An N-linked (GlcNAc...) asparagine; by host glycan is attached at Asn-557. The chain crosses the membrane as a helical span at residues 625 to 645 (FIFIGVGALLLVIVLMIFPIV). At 646–688 (FQCLAKSLDQVQSDLNVLLLKKKKGGNAAPAAEMVELPRVSYT) the chain is on the cytoplasmic side.

In terms of assembly, the mature envelope protein (Env) consists of a trimer of SU-TM heterodimers attached by non-covalent interactions or by a labile interchain disulfide bond. Post-translationally, specific enzymatic cleavages in vivo yield mature proteins. Envelope glycoproteins are synthesized as an inactive precursor that is N-glycosylated and processed likely by host cell furin or by a furin-like protease in the Golgi to yield the mature SU and TM proteins. The cleavage site between SU and TM requires the minimal sequence [KR]-X-[KR]-R.

It localises to the virion membrane. The protein resides in the host cell membrane. Its function is as follows. The surface protein (SU) attaches the virus to the host cell by binding to its receptor. This interaction triggers the refolding of the transmembrane protein (TM) and is thought to activate its fusogenic potential by unmasking its fusion peptide. Fusion occurs at the host cell plasma membrane. In terms of biological role, the transmembrane protein (TM) acts as a class I viral fusion protein. Under the current model, the protein has at least 3 conformational states: pre-fusion native state, pre-hairpin intermediate state, and post-fusion hairpin state. During viral and target cell membrane fusion, the coiled coil regions (heptad repeats) assume a trimer-of-hairpins structure, positioning the fusion peptide in close proximity to the C-terminal region of the ectodomain. The formation of this structure appears to drive apposition and subsequent fusion of viral and target cell membranes. Membranes fusion leads to delivery of the nucleocapsid into the cytoplasm. The chain is Envelope glycoprotein gp70 (env) from Mouse mammary tumor virus (strain C3H) (MMTV).